The sequence spans 718 residues: Catalase-peroxidase (718 aa).

Positions 1 to 24 (MDQKSDNAGKCPVAHTVPKGRSNR) are disordered. The segment at residues 95 to 217 (WHSAGTYRIT…LAAVQMGLIY (123 aa)) is a cross-link (tryptophyl-tyrosyl-methioninium (Trp-Tyr) (with M-243)). His96 functions as the Proton acceptor in the catalytic mechanism. Positions 217–243 (YVNPEGPNGNPDPVAAAREIRETFARM) form a cross-link, tryptophyl-tyrosyl-methioninium (Tyr-Met) (with W-95). His258 is a binding site for heme b.

The protein belongs to the peroxidase family. Peroxidase/catalase subfamily. As to quaternary structure, homodimer or homotetramer. It depends on heme b as a cofactor. Post-translationally, formation of the three residue Trp-Tyr-Met cross-link is important for the catalase, but not the peroxidase activity of the enzyme.

The enzyme catalyses H2O2 + AH2 = A + 2 H2O. It catalyses the reaction 2 H2O2 = O2 + 2 H2O. Functionally, bifunctional enzyme with both catalase and broad-spectrum peroxidase activity. The polypeptide is Catalase-peroxidase (Sinorhizobium fredii (strain NBRC 101917 / NGR234)).